The following is a 206-amino-acid chain: Pyridoxine/pyridoxamine 5'-phosphate oxidase (206 aa).

FMN is bound by residues 49-54 (RMVLLK), 69-70 (YT), Lys-76, and Gln-98. Lys-54 contributes to the substrate binding site. Substrate is bound by residues Tyr-116, Arg-120, and Ser-124. FMN is bound by residues 133-134 (QS) and Trp-177. 183 to 185 (RLH) provides a ligand contact to substrate. Position 187 (Arg-187) interacts with FMN.

The protein belongs to the pyridoxamine 5'-phosphate oxidase family. As to quaternary structure, homodimer. The cofactor is FMN.

It carries out the reaction pyridoxamine 5'-phosphate + O2 + H2O = pyridoxal 5'-phosphate + H2O2 + NH4(+). The catalysed reaction is pyridoxine 5'-phosphate + O2 = pyridoxal 5'-phosphate + H2O2. It functions in the pathway cofactor metabolism; pyridoxal 5'-phosphate salvage; pyridoxal 5'-phosphate from pyridoxamine 5'-phosphate: step 1/1. Its pathway is cofactor metabolism; pyridoxal 5'-phosphate salvage; pyridoxal 5'-phosphate from pyridoxine 5'-phosphate: step 1/1. Functionally, catalyzes the oxidation of either pyridoxine 5'-phosphate (PNP) or pyridoxamine 5'-phosphate (PMP) into pyridoxal 5'-phosphate (PLP). This Jannaschia sp. (strain CCS1) protein is Pyridoxine/pyridoxamine 5'-phosphate oxidase.